Consider the following 85-residue polypeptide: Conotoxin MaIr94 (85 aa).

Positions 1–22 (MKLTCVLIITVLFLTACQLTAA) are cleaved as a signal peptide. The propeptide occupies 23–49 (GNSRDKQEDPVVRSSGEVQRSEDIKLA). 3 disulfides stabilise this stretch: Cys52-Cys69, Cys59-Cys73, and Cys68-Cys84.

This sequence belongs to the conotoxin O1 superfamily. As to expression, expressed by the venom duct.

The protein localises to the secreted. Produces no obvious effect on ionic currents when tested on the mouse dorsal rooted ganglia (DRG). This Conus marmoreus (Marble cone) protein is Conotoxin MaIr94.